The chain runs to 419 residues: Protein translocase subunit SecY (419 aa).

A run of 10 helical transmembrane segments spans residues 19 to 39 (IMILIFARLGNYIPIPGITEV), 64 to 84 (VISILTLGLGPFFSASLAVQF), 113 to 133 (ILTVLFCIIESFFLSNSLRSF), 143 to 163 (FVVAAAVTTGSLVLVWLSEVI), 167 to 189 (GIGNGSSLLILIGNLSRFRFLIN), 202 to 222 (SNLYIIYIIITLVSMLIFSTL), 255 to 275 (FGQAGVVPIIFSSSILLFLTT), 299 to 319 (IFYFFTFLVLIIFFSFFYTLI), 359 to 379 (FVGSILLSALILIPSILAAAL), and 380 to 400 (GVHPLSISGITSLILSFSIIN).

This sequence belongs to the SecY/SEC61-alpha family. Component of the plastid Sec protein translocase complex, which is composed of at least SecY and SecE.

The protein resides in the plastid. Its subcellular location is the chloroplast thylakoid membrane. Its function is as follows. The central subunit of the protein translocation channel SecYE. Consists of two halves formed by TMs 1-5 and 6-10. These two domains form a lateral gate at the front which open onto the bilayer between TMs 2 and 7, and are clamped together by SecE at the back. The channel is closed by both a pore ring composed of hydrophobic SecY resides and a short helix (helix 2A) on the extracellular side of the membrane which forms a plug. In Diacronema lutheri (Unicellular marine alga), this protein is Protein translocase subunit SecY.